A 300-amino-acid chain; its full sequence is Tyrosine recombinase XerC (300 aa).

In terms of domain architecture, Core-binding (CB) spans 1-86 (MESVLDAFDQ…AVKTFTAWAV (86 aa)). In terms of domain architecture, Tyr recombinase spans 107 to 294 (TLPAVLRQDQ…TVARLRAVHD (188 aa)). Catalysis depends on residues R151, K175, H246, R249, and H272. Residue Y281 is the O-(3'-phospho-DNA)-tyrosine intermediate of the active site.

This sequence belongs to the 'phage' integrase family. XerC subfamily. As to quaternary structure, forms a cyclic heterotetrameric complex composed of two molecules of XerC and two molecules of XerD.

It localises to the cytoplasm. In terms of biological role, site-specific tyrosine recombinase, which acts by catalyzing the cutting and rejoining of the recombining DNA molecules. The XerC-XerD complex is essential to convert dimers of the bacterial chromosome into monomers to permit their segregation at cell division. It also contributes to the segregational stability of plasmids. The polypeptide is Tyrosine recombinase XerC (Mycobacterium sp. (strain KMS)).